The chain runs to 133 residues: NADPH-dependent 7-cyano-7-deazaguanine reductase (133 aa).

The active-site Thioimide intermediate is the C48. The active-site Proton donor is the D55. Substrate-binding positions include 70-72 (VEL) and 89-90 (QE).

This sequence belongs to the GTP cyclohydrolase I family. QueF type 1 subfamily.

It localises to the cytoplasm. The catalysed reaction is 7-aminomethyl-7-carbaguanine + 2 NADP(+) = 7-cyano-7-deazaguanine + 2 NADPH + 3 H(+). Its pathway is tRNA modification; tRNA-queuosine biosynthesis. Its function is as follows. Catalyzes the NADPH-dependent reduction of 7-cyano-7-deazaguanine (preQ0) to 7-aminomethyl-7-deazaguanine (preQ1). This Thermoanaerobacter pseudethanolicus (strain ATCC 33223 / 39E) (Clostridium thermohydrosulfuricum) protein is NADPH-dependent 7-cyano-7-deazaguanine reductase.